Consider the following 217-residue polypeptide: GTPase IMAP family member GIMD1 (217 aa).

An AIG1-type G domain is found at 6 to 217 (KMIINLAVFG…ENHFQVLSLA (212 aa)). Residues 15–23 (GRTQSGKSS), Ser36, and 148–150 (HAE) each bind GTP.

This sequence belongs to the TRAFAC class TrmE-Era-EngA-EngB-Septin-like GTPase superfamily. AIG1/Toc34/Toc159-like paraseptin GTPase family. IAN subfamily.

This chain is GTPase IMAP family member GIMD1 (Gimd1), found in Mus musculus (Mouse).